The chain runs to 150 residues: Troponin C, isoform 1 (150 aa).

M1 carries the N-acetylmethionine modification. EF-hand domains follow at residues 7–42, 43–78, 83–118, and 119–150; these read DQVQ…MGVK, ISDR…FLSE, ALKK…LDNK, and LTED…MMNG. Ca(2+) contacts are provided by D56, D58, S60, E62, and E67. Ca(2+) contacts are provided by D132, D134, S136, T138, and E143.

Belongs to the troponin C family.

In terms of biological role, troponin is the central regulatory protein of striated muscle contraction. Tn consists of three components: Tn-I which is the inhibitor of actomyosin ATPase, Tn-T which contains the binding site for tropomyosin and Tn-C. The binding of calcium to Tn-C abolishes the inhibitory action of Tn on actin filaments. The chain is Troponin C, isoform 1 from Homarus americanus (American lobster).